Reading from the N-terminus, the 304-residue chain is GTP cyclohydrolase FolE2 (304 aa).

Belongs to the GTP cyclohydrolase IV family.

It catalyses the reaction GTP + H2O = 7,8-dihydroneopterin 3'-triphosphate + formate + H(+). It functions in the pathway cofactor biosynthesis; 7,8-dihydroneopterin triphosphate biosynthesis; 7,8-dihydroneopterin triphosphate from GTP: step 1/1. In terms of biological role, converts GTP to 7,8-dihydroneopterin triphosphate. In Hahella chejuensis (strain KCTC 2396), this protein is GTP cyclohydrolase FolE2.